The sequence spans 198 residues: Probable nicotinate-nucleotide adenylyltransferase (198 aa).

The protein belongs to the NadD family.

The enzyme catalyses nicotinate beta-D-ribonucleotide + ATP + H(+) = deamido-NAD(+) + diphosphate. It functions in the pathway cofactor biosynthesis; NAD(+) biosynthesis; deamido-NAD(+) from nicotinate D-ribonucleotide: step 1/1. Its function is as follows. Catalyzes the reversible adenylation of nicotinate mononucleotide (NaMN) to nicotinic acid adenine dinucleotide (NaAD). This chain is Probable nicotinate-nucleotide adenylyltransferase, found in Chlorobium phaeobacteroides (strain BS1).